Here is a 119-residue protein sequence, read N- to C-terminus: Large ribosomal subunit protein uL18 (119 aa).

This sequence belongs to the universal ribosomal protein uL18 family. Part of the 50S ribosomal subunit; part of the 5S rRNA/L5/L18/L25 subcomplex. Contacts the 5S and 23S rRNAs.

This is one of the proteins that bind and probably mediate the attachment of the 5S RNA into the large ribosomal subunit, where it forms part of the central protuberance. The polypeptide is Large ribosomal subunit protein uL18 (Clostridium botulinum (strain Langeland / NCTC 10281 / Type F)).